A 720-amino-acid polypeptide reads, in one-letter code: DNA replication licensing factor mcm7-B (720 aa).

The segment at cysteine 183–cysteine 210 adopts a C4-type zinc-finger fold. The 207-residue stretch at phenylalanine 331–threonine 537 folds into the MCM domain. ATP-binding residues include tyrosine 344, glycine 383, alanine 385, lysine 386, serine 387, asparagine 488, arginine 513, and arginine 603. Positions serine 512–aspartate 515 match the Arginine finger motif.

The protein belongs to the MCM family. As to quaternary structure, component of the mcm2-7 complex (RLF-M). The complex forms a toroidal hexameric ring with the proposed subunit order mcm2-mcm6-mcm4-mcm7-mcm3-mcm5. The heterodimer of mmcm3/mcm5 interacts with mcm4, mmcm6, mcm7 and weakly with mcm2. The N-terminus is required for interaction with mmcm3, though this interaction may not be direct, and remains in a complex with mmcm3 throughout the cell cycle. Begins to associate with zmcm6 at the neurula stage. Component of the replisome complex. Component of the CMG helicase complex, composed of the mcm2-7 complex, the GINS complex and cdc45. In terms of processing, ubiquitinated by traip when forks converge following formation of DNA interstrand cross-links. Short ubiquitin chains on mcm7 promote recruitment of DNA glycosylase neil3. If the interstrand cross-link cannot be cleaved by neil3, the ubiquitin chains continue to grow on mcm7, promoting the unloading of the CMG helicase complex by the vcp/p97 ATPase.

The protein resides in the nucleus. It is found in the chromosome. It carries out the reaction ATP + H2O = ADP + phosphate + H(+). In terms of biological role, acts as a component of the mcm2-7 complex (mcm complex) which is the putative replicative helicase essential for 'once per cell cycle' DNA replication initiation and elongation in eukaryotic cells. The active ATPase sites in the mcm2-7 ring are formed through the interaction surfaces of two neighboring subunits such that a critical structure of a conserved arginine finger motif is provided in trans relative to the ATP-binding site of the Walker A box of the adjacent subunit. The six ATPase active sites, however, are likely to contribute differentially to the complex helicase activity. The existence of maternal and zygotic forms of mcm3 and mcm6 suggests that specific forms of mcm2-7 complexes may be used during different stages of development. The chain is DNA replication licensing factor mcm7-B (mcm7-b) from Xenopus laevis (African clawed frog).